The primary structure comprises 239 residues: Large ribosomal subunit protein mL67 (239 aa).

Belongs to the mitochondrion-specific ribosomal protein mL67 family. Component of the mitochondrial large ribosomal subunit (mt-LSU).

Its subcellular location is the nucleus. The protein localises to the mitochondrion. Component of the mitochondrial ribosome (mitoribosome), a dedicated translation machinery responsible for the synthesis of mitochondrial genome-encoded proteins, including at least some of the essential transmembrane subunits of the mitochondrial respiratory chain. The mitoribosomes are attached to the mitochondrial inner membrane and translation products are cotranslationally integrated into the membrane. mL67/MHR1 also has extraribosomal functions, being involved in regulation of mitochondrial DNA recombination, maintenance and repair, and generation of homoplasmic cells. mL67/MHR1 also acts as transcription factor involved in regulation of RNA polymerase II-dependent transcription. The chain is Large ribosomal subunit protein mL67 (MHR1) from Candida albicans (strain SC5314 / ATCC MYA-2876) (Yeast).